A 621-amino-acid chain; its full sequence is C4-dicarboxylate transport sensor protein DctB (621 aa).

The Cytoplasmic portion of the chain corresponds to 1–26; the sequence is MHHVRMVKLPAEASDPHALRSRARRS. Residues 27 to 45 traverse the membrane as a helical segment; it reads WLVFAAVALVLLAAGLLLA. Topologically, residues 46–320 are periplasmic; it reads RDYGRSQALA…PLAAGAREAQ (275 aa). Residues 321 to 338 traverse the membrane as a helical segment; sequence LLTLAALVPLLALAALLL. At 339-621 the chain is on the cytoplasmic side; sequence RRRQVVAMRS…TTFAVNLKKA (283 aa). The region spanning 412–621 is the Histidine kinase domain; it reads GVAHEINQPV…TTFAVNLKKA (210 aa). Phosphohistidine; by autocatalysis is present on histidine 415.

Autophosphorylated.

It is found in the cell inner membrane. It carries out the reaction ATP + protein L-histidine = ADP + protein N-phospho-L-histidine.. Its function is as follows. Member of the two-component regulatory system DctB/DctD involved in the transport of C4-dicarboxylates. DctB functions as a membrane-associated protein kinase that phosphorylates DctD in response to environmental signals. This Rhizobium meliloti (strain 1021) (Ensifer meliloti) protein is C4-dicarboxylate transport sensor protein DctB (dctB).